The chain runs to 399 residues: O-antigen polymerase (399 aa).

The next 10 helical transmembrane spans lie at Phe-4–Val-24, Leu-37–Phe-57, Ala-64–Leu-84, Ile-97–Leu-117, Gly-151–Met-171, Ile-185–Val-205, Phe-222–Phe-242, Phe-309–Ala-329, Leu-353–Ser-373, and Ser-374–Asn-394.

It is found in the cell inner membrane. It carries out the reaction n lipid-linked O-antigen repeat units = a lipid-linked O antigen + (n-1) polyisoprenyl diphosphate.. It participates in bacterial outer membrane biogenesis; LPS O-antigen biosynthesis. Functionally, polymerase involved in the biosynthesis of the lipopolysaccharide (LPS). Catalyzes the polymerization of the O-antigen repeat units on the periplasmic face of the inner membrane, leading to the formation of the lipid-linked O-antigen molecule. The polypeptide is O-antigen polymerase (Salmonella muenchen).